Here is a 280-residue protein sequence, read N- to C-terminus: Shikimate dehydrogenase (NADP(+)) (280 aa).

Shikimate contacts are provided by residues 23-25 and Thr-70; that span reads SLS. The Proton acceptor role is filled by Lys-74. Asn-95 and Asp-111 together coordinate shikimate. Residues 135 to 139, 158 to 163, and Ile-221 contribute to the NADP(+) site; these read GSGGA and NRTISK. Tyr-223 serves as a coordination point for shikimate. Gly-247 contacts NADP(+).

Belongs to the shikimate dehydrogenase family. In terms of assembly, homodimer.

The enzyme catalyses shikimate + NADP(+) = 3-dehydroshikimate + NADPH + H(+). Its pathway is metabolic intermediate biosynthesis; chorismate biosynthesis; chorismate from D-erythrose 4-phosphate and phosphoenolpyruvate: step 4/7. In terms of biological role, involved in the biosynthesis of the chorismate, which leads to the biosynthesis of aromatic amino acids. Catalyzes the reversible NADPH linked reduction of 3-dehydroshikimate (DHSA) to yield shikimate (SA). The sequence is that of Shikimate dehydrogenase (NADP(+)) from Buchnera aphidicola subsp. Cinara cedri (strain Cc).